Here is a 104-residue protein sequence, read N- to C-terminus: Ig lambda-3 chain C region (104 aa).

Positions 6-99 (PTLTMFPPSP…EGDTVEKSLS (94 aa)) constitute an Ig-like domain. Cysteines 27 and 85 form a disulfide.

This Mus musculus (Mouse) protein is Ig lambda-3 chain C region (Iglc3).